Here is a 306-residue protein sequence, read N- to C-terminus: Ornithine carbamoyltransferase (306 aa).

Carbamoyl phosphate-binding positions include 53-56, glutamine 80, arginine 104, and 131-134; these read STRT and HPCQ. L-ornithine-binding positions include asparagine 162, aspartate 219, and 223–224; that span reads SM. Carbamoyl phosphate is bound by residues 259–260 and arginine 287; that span reads CL.

It belongs to the aspartate/ornithine carbamoyltransferase superfamily. OTCase family.

The protein localises to the cytoplasm. It catalyses the reaction carbamoyl phosphate + L-ornithine = L-citrulline + phosphate + H(+). Its pathway is amino-acid degradation; L-arginine degradation via ADI pathway; carbamoyl phosphate from L-arginine: step 2/2. Functionally, reversibly catalyzes the transfer of the carbamoyl group from carbamoyl phosphate (CP) to the N(epsilon) atom of ornithine (ORN) to produce L-citrulline. The protein is Ornithine carbamoyltransferase of Acinetobacter baumannii (strain AYE).